The following is a 398-amino-acid chain: Acetate kinase (398 aa).

Position 7 (N7) interacts with Mg(2+). K14 serves as a coordination point for ATP. R91 is a substrate binding site. D148 (proton donor/acceptor) is an active-site residue. ATP contacts are provided by residues 208–212 (HIGNG), 283–285 (DLR), and 331–335 (GVGEN). E385 lines the Mg(2+) pocket.

The protein belongs to the acetokinase family. As to quaternary structure, homodimer. Mg(2+) is required as a cofactor. It depends on Mn(2+) as a cofactor.

It localises to the cytoplasm. The enzyme catalyses acetate + ATP = acetyl phosphate + ADP. It participates in metabolic intermediate biosynthesis; acetyl-CoA biosynthesis; acetyl-CoA from acetate: step 1/2. Its function is as follows. Catalyzes the formation of acetyl phosphate from acetate and ATP. Can also catalyze the reverse reaction. This chain is Acetate kinase, found in Porphyromonas gingivalis (strain ATCC 33277 / DSM 20709 / CIP 103683 / JCM 12257 / NCTC 11834 / 2561).